The following is a 291-amino-acid chain: Elongation factor Ts (291 aa).

The segment at 79–82 is involved in Mg(2+) ion dislocation from EF-Tu; that stretch reads TDFV.

This sequence belongs to the EF-Ts family.

The protein localises to the cytoplasm. Associates with the EF-Tu.GDP complex and induces the exchange of GDP to GTP. It remains bound to the aminoacyl-tRNA.EF-Tu.GTP complex up to the GTP hydrolysis stage on the ribosome. In Anaplasma marginale (strain Florida), this protein is Elongation factor Ts.